The primary structure comprises 612 residues: Proton channel OTOP1 (612 aa).

A compositionally biased stretch (low complexity) spans 1-46; the sequence is MLEGLGSPASPRAAASASVAGSSGPAACSPPSSSAPRSPESPAPRR. The segment at 1-50 is disordered; the sequence is MLEGLGSPASPRAAASASVAGSSGPAACSPPSSSAPRSPESPAPRRGGVR. The Cytoplasmic segment spans residues 1–58; the sequence is MLEGLGSPASPRAAASASVAGSSGPAACSPPSSSAPRSPESPAPRRGGVRASVPQKLA. A helical membrane pass occupies residues 59 to 80; sequence EMLSSQYGLIVFVAGLLLLLAW. Residues 81–88 lie on the Extracellular side of the membrane; the sequence is AVHAAGVS. Residues 89-112 traverse the membrane as a helical segment; the sequence is KSDLLCFLTALMLLQLLWMLWYVG. The Cytoplasmic portion of the chain corresponds to 113–130; the sequence is RSSAHRRLFRLKDTHAGA. The helical transmembrane segment at 131 to 153 threads the bilayer; it reads GWLRGSITLFAVITVILGCLKIG. The Extracellular segment spans residues 154 to 163; sequence YFIGFSECLS. The helical transmembrane segment at 164–188 threads the bilayer; it reads ATEGVFPVTHSVHTLLQVYFLWGHA. Topologically, residues 189-196 are cytoplasmic; it reads KDIIQSFK. Residues 197 to 223 traverse the membrane as a helical segment; sequence TLERFGVIHSVFTNLLLWANGVLNESK. Residues 224-264 lie on the Extracellular side of the membrane; sequence HQLNEHKERLITLGFGNITTVLDDHTPQCNCTPPTLCTAIS. Residues 265–290 traverse the membrane as a helical segment; the sequence is HGIYYLYPFNIEYQILASTMLYVLWK. Residues 291–311 are Cytoplasmic-facing; the sequence is NIGRKVDSHQHQKMQFKSDGV. Residues 312–334 form a helical membrane-spanning segment; sequence MVGAVLGLTVLAATIAVVVVYLI. The Extracellular portion of the chain corresponds to 335 to 344; the sequence is HIGRSKTKSE. A helical membrane pass occupies residues 345 to 370; that stretch reads SALIMFYLYAITLLMLMGAAGLAGIR. Topologically, residues 371–388 are cytoplasmic; it reads IYRIDEKSLDESKNPARK. A helical transmembrane segment spans residues 389–413; the sequence is LDSDLLVGTASGSWLISWGSILAIL. The Extracellular segment spans residues 414–423; it reads CAEGHPRYTW. A helical membrane pass occupies residues 424–444; the sequence is YNLPYSILAIVEKYIQNLFIF. Topologically, residues 445-544 are cytoplasmic; the sequence is ESIHREPEKL…QGNAKRKVLR (100 aa). The tract at residues 499-525 is disordered; it reads ANGNVCMRESHDKEEEKQEESSWGGSP. The segment covering 506 to 518 has biased composition (basic and acidic residues); the sequence is RESHDKEEEKQEE. The chain crosses the membrane as a helical span at residues 545-563; sequence NIAAFLFLCNISLWIPPAF. The Extracellular portion of the chain corresponds to 564-581; the sequence is GCRPEYDNGLEEIVFGFE. A helical transmembrane segment spans residues 582–605; sequence PWIIVVNLAMPFSIFYRMHAAASL. At 606–612 the chain is on the cytoplasmic side; the sequence is FEVYCKI.

The protein belongs to the otopetrin family. As to quaternary structure, homodimer. Interacts with STAT1, independently of STAT1 phosphorylation status.

The protein resides in the cell membrane. The protein localises to the cell projection. Its subcellular location is the microvillus. It carries out the reaction H(+)(in) = H(+)(out). With respect to regulation, activated by both acid and alkali, with proton influx in response to extracellular acid and proton efflux during alkali stimulation. Inhibited by Zn(2+); this inhibition is thought to be pH-sensitive. Currents evoked in response to mild acid (pH 6.0) stimulus may also be mildly potentiated by exposure to Zn(2+). Activated by NH(4)Cl. Its function is as follows. Proton-selective ion channel. Biphasically modulated by acid and alkali, mediating proton influx and efflux in response to extracellular acid and base stimulation, respectively. Sour taste receptor, which carries inward currents in response to extracellular acidification. Sensor for ammonium chloride (NH(4)Cl) in taste receptor cells. NH(4)Cl acts by increasing the intracellular pH, thereby generating a driving force for proton entry through OTOP1 channel. Might also participate in alkaline sensation. Plays a role in the regulation of Ca(2+) flux in response to purigenic (ATP, ADP and UDP) stimuli, leading to increase in cytosolic Ca(2+) due to influx of extracellular calcium. May play this role by inhibiting P2Y purinoceptor-mediated Ca(2+) release in a Ca(2+)-dependent manner and promote an influx of Ca(2+) in response to ATP. Through this mechanism and possibly others, plays a role in the formation and function of calcium carbonate-based structures in the vestibular system of the inner ear, called otoconia, that sense gravity and linear acceleration. In obesity, may attenuate adipose tissue inflammation, through the negative regulation of IFNG signaling, hence may play an adaptive role in the maintainance of metabolic homeostasis. Following alkali activation, may also be permeable Na(+), K(+), Cs(+) and Li(+). In Homo sapiens (Human), this protein is Proton channel OTOP1.